The sequence spans 400 residues: 3-phenylpropionate/cinnamic acid dioxygenase ferredoxin--NAD(+) reductase component (400 aa).

5 to 36 (TIIIVGGGQAAAMAAASLRQQGFTGELHLFSD) serves as a coordination point for FAD. 146 to 174 (SVVIVGAGTIGLELAASATQRGCKVTVIE) lines the NAD(+) pocket.

The protein belongs to the bacterial ring-hydroxylating dioxygenase ferredoxin reductase family. In terms of assembly, this dioxygenase system consists of four proteins: the two subunits of the hydroxylase component (HcaE and HcaF), a ferredoxin (HcaC) and a ferredoxin reductase (HcaD). FAD is required as a cofactor.

It catalyses the reaction 2 reduced [2Fe-2S]-[ferredoxin] + NAD(+) + H(+) = 2 oxidized [2Fe-2S]-[ferredoxin] + NADH. The protein operates within aromatic compound metabolism; 3-phenylpropanoate degradation. Part of the multicomponent 3-phenylpropionate dioxygenase, that converts 3-phenylpropionic acid (PP) and cinnamic acid (CI) into 3-phenylpropionate-dihydrodiol (PP-dihydrodiol) and cinnamic acid-dihydrodiol (CI-dihydrodiol), respectively. The chain is 3-phenylpropionate/cinnamic acid dioxygenase ferredoxin--NAD(+) reductase component from Escherichia coli O17:K52:H18 (strain UMN026 / ExPEC).